We begin with the raw amino-acid sequence, 193 residues long: Ion-translocating oxidoreductase complex subunit A (193 aa).

Transmembrane regions (helical) follow at residues 5–25 (LLLF…FLGL), 47–67 (FVIT…LLPL), 72–92 (LRTM…EMVV), 102–122 (LLGI…VPLL), 134–154 (AIYG…FAGV), and 171–191 (SIAL…AGLV).

The protein belongs to the NqrDE/RnfAE family. In terms of assembly, the complex is composed of six subunits: RnfA, RnfB, RnfC, RnfD, RnfE and RnfG.

It localises to the cell inner membrane. Its function is as follows. Part of a membrane-bound complex that couples electron transfer with translocation of ions across the membrane. The polypeptide is Ion-translocating oxidoreductase complex subunit A (Erwinia tasmaniensis (strain DSM 17950 / CFBP 7177 / CIP 109463 / NCPPB 4357 / Et1/99)).